The sequence spans 21 residues: Pedibin (21 aa).

The disordered stretch occupies residues 1-21 (AGEDVSHELEEKEKALANHSE).

In terms of biological role, morphogenetically active peptide. Active in foot development. This Hydra vulgaris (Hydra) protein is Pedibin.